A 94-amino-acid polypeptide reads, in one-letter code: UPF0337 protein NE2439 (94 aa).

Residues 74 to 94 form a disordered region; the sequence is KNVGEAVSSRQKSVKKRSLYT. A compositionally biased stretch (basic residues) spans 85–94; the sequence is KSVKKRSLYT.

This sequence belongs to the UPF0337 (CsbD) family.

The protein is UPF0337 protein NE2439 of Nitrosomonas europaea (strain ATCC 19718 / CIP 103999 / KCTC 2705 / NBRC 14298).